The sequence spans 705 residues: MSKQRIYEYAKELNLKSKEIIDELKSMNIEVSNHMQALEDDQIKALDKKFKKEQKNDNKQSTQNNHQKSNNQNQNKGQQKDNKKNQQQNNKGNKGNKKNNRNNKKNNKNNKPQNQPAAPKEIPSKVTYQEGITVGEFADKLNVESSEIIKKLFLLGIVANINQSLNQETIELIADDYGVEVEEEVVINEEDLSIYFEDEKDDPEAIERPAVVTIMGHVDHGKTTLLDSIRHTKVTAGEAGGITQHIGAYQIENDGKKITFLDTPGHAAFTTMRARGAQVTDITILVVAADDGVMPQTIEAINHAKEAEVPIIVAVNKIDKPTSNPDRVMQELTEYGLIPEDWGGETIFVPLSALSGDGIDDLLEMIGLVAEVQELKANPKNRAVGTVIEAELDKSRGPSASLLVQNGTLNVGDAIVVGNTYGRIRAMVNDLGQRIKMAGPSTPVEITGINDVPQAGDRFVVFSDEKQARRIGESRHEASIVQQRQESKNVSLDNLFEQMKQGEMKDLNVIIKGDVQGSVEALAASLMKIDVEGVNVRIIHTAVGAINESDVTLANASNGIIIGFNVRPDSGAKRAAEAENVDMRLHRVIYNVIEEIESAMKGLLDPEFEEQVIGQAEVRQTFKVSKVGTIAGCYVTEGKITRNAGVRIIRDGIVQYEGELDTLKRFKDDAKEVAKGYECGITIENYNDLKEGDVIEAFEMVEIKR.

The tract at residues 40 to 124 is disordered; that stretch reads DDQIKALDKK…QPAAPKEIPS (85 aa). The segment covering 41-58 has biased composition (basic and acidic residues); that stretch reads DQIKALDKKFKKEQKNDN. Over residues 59–77 the composition is skewed to low complexity; it reads KQSTQNNHQKSNNQNQNKG. Over residues 94–108 the composition is skewed to basic residues; the sequence is KGNKKNNRNNKKNNK. The tr-type G domain maps to 207–376; that stretch reads ERPAVVTIMG…GLVAEVQELK (170 aa). Residues 216-223 form a G1 region; sequence GHVDHGKT. Residue 216-223 participates in GTP binding; the sequence is GHVDHGKT. A G2 region spans residues 241 to 245; that stretch reads GITQH. A G3 region spans residues 262–265; that stretch reads DTPG. GTP contacts are provided by residues 262 to 266 and 316 to 319; these read DTPGH and NKID. Positions 316-319 are G4; that stretch reads NKID. Positions 352–354 are G5; it reads SAL.

Belongs to the TRAFAC class translation factor GTPase superfamily. Classic translation factor GTPase family. IF-2 subfamily.

It is found in the cytoplasm. One of the essential components for the initiation of protein synthesis. Protects formylmethionyl-tRNA from spontaneous hydrolysis and promotes its binding to the 30S ribosomal subunits. Also involved in the hydrolysis of GTP during the formation of the 70S ribosomal complex. This Staphylococcus aureus (strain MSSA476) protein is Translation initiation factor IF-2.